We begin with the raw amino-acid sequence, 377 residues long: Queuine tRNA-ribosyltransferase (377 aa).

D89 functions as the Proton acceptor in the catalytic mechanism. Substrate-binding positions include 89–93, D143, Q187, and G214; that span reads DSGGF. The tract at residues 245–251 is RNA binding; that stretch reads GVGKPED. Residue D264 is the Nucleophile of the active site. The RNA binding; important for wobble base 34 recognition stretch occupies residues 269–273; sequence TRNAR. The Zn(2+) site is built by C302, C304, C307, and H333.

It belongs to the queuine tRNA-ribosyltransferase family. Homodimer. Within each dimer, one monomer is responsible for RNA recognition and catalysis, while the other monomer binds to the replacement base PreQ1. Requires Zn(2+) as cofactor.

The enzyme catalyses 7-aminomethyl-7-carbaguanine + guanosine(34) in tRNA = 7-aminomethyl-7-carbaguanosine(34) in tRNA + guanine. Its pathway is tRNA modification; tRNA-queuosine biosynthesis. Catalyzes the base-exchange of a guanine (G) residue with the queuine precursor 7-aminomethyl-7-deazaguanine (PreQ1) at position 34 (anticodon wobble position) in tRNAs with GU(N) anticodons (tRNA-Asp, -Asn, -His and -Tyr). Catalysis occurs through a double-displacement mechanism. The nucleophile active site attacks the C1' of nucleotide 34 to detach the guanine base from the RNA, forming a covalent enzyme-RNA intermediate. The proton acceptor active site deprotonates the incoming PreQ1, allowing a nucleophilic attack on the C1' of the ribose to form the product. After dissociation, two additional enzymatic reactions on the tRNA convert PreQ1 to queuine (Q), resulting in the hypermodified nucleoside queuosine (7-(((4,5-cis-dihydroxy-2-cyclopenten-1-yl)amino)methyl)-7-deazaguanosine). In Shewanella halifaxensis (strain HAW-EB4), this protein is Queuine tRNA-ribosyltransferase.